Reading from the N-terminus, the 446-residue chain is Probable inactive lipase MT1628 (446 aa).

This sequence belongs to the AB hydrolase superfamily. Lipase family.

This is Probable inactive lipase MT1628 from Mycobacterium tuberculosis (strain CDC 1551 / Oshkosh).